The sequence spans 268 residues: Tryptophan synthase alpha chain (268 aa).

Active-site proton acceptor residues include glutamate 49 and aspartate 60.

The protein belongs to the TrpA family. As to quaternary structure, tetramer of two alpha and two beta chains.

The enzyme catalyses (1S,2R)-1-C-(indol-3-yl)glycerol 3-phosphate + L-serine = D-glyceraldehyde 3-phosphate + L-tryptophan + H2O. It functions in the pathway amino-acid biosynthesis; L-tryptophan biosynthesis; L-tryptophan from chorismate: step 5/5. Its function is as follows. The alpha subunit is responsible for the aldol cleavage of indoleglycerol phosphate to indole and glyceraldehyde 3-phosphate. The sequence is that of Tryptophan synthase alpha chain from Aeromonas hydrophila subsp. hydrophila (strain ATCC 7966 / DSM 30187 / BCRC 13018 / CCUG 14551 / JCM 1027 / KCTC 2358 / NCIMB 9240 / NCTC 8049).